We begin with the raw amino-acid sequence, 638 residues long: Threonine--tRNA ligase (638 aa).

The TGS domain maps to 1–61 (MPIITLPDGS…NKDSKVVIIT (61 aa)). The interval 242–533 (DHRKLGKKHS…LIEQYEAKFP (292 aa)) is catalytic. Positions 333, 384, and 510 each coordinate Zn(2+).

This sequence belongs to the class-II aminoacyl-tRNA synthetase family. Homodimer. Requires Zn(2+) as cofactor.

It localises to the cytoplasm. The catalysed reaction is tRNA(Thr) + L-threonine + ATP = L-threonyl-tRNA(Thr) + AMP + diphosphate + H(+). Catalyzes the attachment of threonine to tRNA(Thr) in a two-step reaction: L-threonine is first activated by ATP to form Thr-AMP and then transferred to the acceptor end of tRNA(Thr). Also edits incorrectly charged L-seryl-tRNA(Thr). In Prochlorococcus marinus (strain MIT 9301), this protein is Threonine--tRNA ligase.